The sequence spans 75 residues: Translation initiation factor IF-1 (75 aa).

In terms of domain architecture, S1-like spans 1–75 (MANLPKEQKL…SKGRIVYRFK (75 aa)).

It belongs to the IF-1 family. In terms of assembly, component of the 30S ribosomal translation pre-initiation complex which assembles on the 30S ribosome in the order IF-2 and IF-3, IF-1 and N-formylmethionyl-tRNA(fMet); mRNA recruitment can occur at any time during PIC assembly.

It is found in the cytoplasm. Functionally, one of the essential components for the initiation of protein synthesis. Stabilizes the binding of IF-2 and IF-3 on the 30S subunit to which N-formylmethionyl-tRNA(fMet) subsequently binds. Helps modulate mRNA selection, yielding the 30S pre-initiation complex (PIC). Upon addition of the 50S ribosomal subunit IF-1, IF-2 and IF-3 are released leaving the mature 70S translation initiation complex. This chain is Translation initiation factor IF-1, found in Mesomycoplasma hyopneumoniae (strain 232) (Mycoplasma hyopneumoniae).